A 229-amino-acid polypeptide reads, in one-letter code: uncharacterized protein (229 aa).

This sequence to T.pallidum TP_0315, TP_0618 and TP_0619.

This is an uncharacterized protein from Treponema pallidum (strain Nichols).